Reading from the N-terminus, the 883-residue chain is Valine--tRNA ligase (883 aa).

The 'HIGH' region motif lies at 46–56 (PNVTGKLHLGH). Residues 520–524 (KMSKS) carry the 'KMSKS' region motif. Lys523 is an ATP binding site. Residues 809 to 883 (LADLLNVEEE…RIDEMKKLVK (75 aa)) adopt a coiled-coil conformation.

The protein belongs to the class-I aminoacyl-tRNA synthetase family. ValS type 1 subfamily. As to quaternary structure, monomer.

The protein localises to the cytoplasm. The catalysed reaction is tRNA(Val) + L-valine + ATP = L-valyl-tRNA(Val) + AMP + diphosphate. Functionally, catalyzes the attachment of valine to tRNA(Val). As ValRS can inadvertently accommodate and process structurally similar amino acids such as threonine, to avoid such errors, it has a 'posttransfer' editing activity that hydrolyzes mischarged Thr-tRNA(Val) in a tRNA-dependent manner. This Streptococcus pneumoniae serotype 4 (strain ATCC BAA-334 / TIGR4) protein is Valine--tRNA ligase.